Reading from the N-terminus, the 210-residue chain is Glutathione S-transferase P 2 (210 aa).

The region spanning S1–S82 is the GST N-terminal domain. Glutathione is bound by residues Y7, R13, W38, K46, Q53 to I54, and Q66 to S67. The region spanning N83 to I204 is the GST C-terminal domain.

It belongs to the GST superfamily. Pi family. In terms of assembly, homodimer. As to expression, liver, kidney, muscle, skin, lung and ovary.

It carries out the reaction RX + glutathione = an S-substituted glutathione + a halide anion + H(+). In terms of biological role, conjugation of reduced glutathione to a wide number of exogenous and endogenous hydrophobic electrophiles. In Bufo bufo (European toad), this protein is Glutathione S-transferase P 2.